The chain runs to 218 residues: Large ribosomal subunit protein uL3 (218 aa).

An N5-methylglutamine modification is found at Gln153.

It belongs to the universal ribosomal protein uL3 family. In terms of assembly, part of the 50S ribosomal subunit. Forms a cluster with proteins L14 and L19. Post-translationally, methylated by PrmB.

In terms of biological role, one of the primary rRNA binding proteins, it binds directly near the 3'-end of the 23S rRNA, where it nucleates assembly of the 50S subunit. This is Large ribosomal subunit protein uL3 from Alkalilimnicola ehrlichii (strain ATCC BAA-1101 / DSM 17681 / MLHE-1).